A 354-amino-acid polypeptide reads, in one-letter code: Guanine nucleotide-binding protein G(i) subunit alpha-3 (354 aa).

The N-myristoyl glycine moiety is linked to residue Gly2. Residue Cys3 is the site of S-palmitoyl cysteine attachment. Positions 32–354 (KEVKLLLLGA…KNNLKECGLY (323 aa)) constitute a G-alpha domain. Positions 35 to 48 (KLLLLGAGESGKST) are G1 motif. GTP contacts are provided by Gly42, Glu43, Ser44, Gly45, Lys46, Ser47, Thr48, Asp150, Ser151, Leu175, Arg176, Thr177, Arg178, Val179, Lys180, Thr181, Val201, Gly203, Asn269, Lys270, Asp272, Leu273, Cys325, Ala326, and Thr327. Residue Ser47 coordinates Mg(2+). The segment at 173–181 (DVLRTRVKT) is G2 motif. Position 181 (Thr181) interacts with Mg(2+). The interval 196-205 (FKMFDVGGQR) is G3 motif. Residues 265–272 (ILFLNKKD) form a G4 motif region. The G5 motif stretch occupies residues 324–329 (TCATDT).

This sequence belongs to the G-alpha family. G(i/o/t/z) subfamily. Heterotrimeric G proteins are composed of 3 units; alpha, beta and gamma. The alpha subunit contains the guanine nucleotide binding site. GTP binding causes dissociation of the heterotrimer, liberating the individual subunits so that they can interact with downstream effector proteins. Forms a complex with CCDC88A/GIV and EGFR which leads to enhanced EGFR signaling and triggering of cell migration; ligand stimulation is required for recruitment of GNAI3 to the complex. Interacts (inactive GDP-bound form) with CCDC88A/GIV (via GBA motif); the interaction leads to activation of GNAI3. Interacts (inactive GDP-bound form) with CCDC88C/DAPLE (via GBA motif); the interaction leads to activation of GNAI3. Interacts (inactive GDP-bound form) with NUCB1 (via GBA motif) and NUCB2 (via GBA motif); the interaction leads to activation of GNAI3. Interacts (inactive GDP-bound form) with PLCD4 (via GBA motif); the interaction leads to activation of GNAI3. Interacts with INSR; the interaction is probably mediated by CCDC88A/GIV. Interacts with GPSM1. Interacts (GDP-bound form) with GPSM2 (via GoLoco domains). Does not interact with RGS2. Interacts with RGS8 and RGS10; this strongly enhances the intrinsic GTPase activity. Interacts with RGS16; this strongly enhances the intrinsic GTPase activity. Interacts with RGS12. Interacts (via active GTP- or inactive GDP-bound form) with RGS14. Interacts (via active GTP-bound form) with TRPC5 (via ANK repeats) in a homotetrameric ion channel; the interaction is direct and activates the channel activity.

It localises to the cytoplasm. Its subcellular location is the cell membrane. The protein localises to the cytoskeleton. The protein resides in the microtubule organizing center. It is found in the centrosome. Functionally, heterotrimeric guanine nucleotide-binding proteins (G proteins) function as transducers downstream of G protein-coupled receptors (GPCRs) in numerous signaling cascades. The alpha chain contains the guanine nucleotide binding site and alternates between an active, GTP-bound state and an inactive, GDP-bound state. Signaling by an activated GPCR promotes GDP release and GTP binding. The alpha subunit has a low GTPase activity that converts bound GTP to GDP, thereby terminating the signal. Both GDP release and GTP hydrolysis are modulated by numerous regulatory proteins. Signaling is mediated via effector proteins, such as adenylate cyclase. Inhibits adenylate cyclase activity, leading to decreased intracellular cAMP levels. Stimulates the activity of receptor-regulated K(+) channels. The active GTP-bound form prevents the association of RGS14 with centrosomes and is required for the translocation of RGS14 from the cytoplasm to the plasma membrane. May play a role in cell division. The active GTP-bound form activates the calcium permeant TRPC5 ion channels. The polypeptide is Guanine nucleotide-binding protein G(i) subunit alpha-3 (GNAI3) (Cricetulus griseus (Chinese hamster)).